Here is a 376-residue protein sequence, read N- to C-terminus: GDSL esterase/lipase At5g55050 (376 aa).

A signal peptide spans M1–A29. The active-site Nucleophile is the S46. N-linked (GlcNAc...) asparagine glycosylation is found at N134 and N245. Active-site residues include D340 and H344.

The protein belongs to the 'GDSL' lipolytic enzyme family.

The protein localises to the secreted. The chain is GDSL esterase/lipase At5g55050 from Arabidopsis thaliana (Mouse-ear cress).